A 435-amino-acid polypeptide reads, in one-letter code: Glutamyl-tRNA reductase (435 aa).

Residues 49–52 (TCNR), S109, 114–116 (ETQ), and Q120 contribute to the substrate site. Catalysis depends on C50, which acts as the Nucleophile. Residue 189 to 194 (GAGEMS) participates in NADP(+) binding.

This sequence belongs to the glutamyl-tRNA reductase family. As to quaternary structure, homodimer.

The enzyme catalyses (S)-4-amino-5-oxopentanoate + tRNA(Glu) + NADP(+) = L-glutamyl-tRNA(Glu) + NADPH + H(+). It participates in porphyrin-containing compound metabolism; protoporphyrin-IX biosynthesis; 5-aminolevulinate from L-glutamyl-tRNA(Glu): step 1/2. Catalyzes the NADPH-dependent reduction of glutamyl-tRNA(Glu) to glutamate 1-semialdehyde (GSA). The protein is Glutamyl-tRNA reductase of Listeria monocytogenes serotype 4a (strain HCC23).